The chain runs to 230 residues: Membrane protein (230 aa).

The Virion surface portion of the chain corresponds to 1 to 24; that stretch reads MSSPTTPVPVISWTADEAIKFLKE. The chain crosses the membrane as a helical span at residues 25–45; it reads WNFSLGIIVLFITIILQFGYT. The Intravirion portion of the chain corresponds to 46–55; it reads SRSMFVYVIK. Residues 56 to 76 traverse the membrane as a helical segment; it reads MVILWLMWPLTIILTIFNCVY. Topologically, residues 77-84 are virion surface; sequence ALNNVYLG. A helical membrane pass occupies residues 85–105; sequence FSIVFTIVAIIMWVVYFVNSI. At 106–228 the chain is on the intravirion side; the sequence is RLFIRTGSWW…SGMDTALLRN (123 aa).

It belongs to the betacoronaviruses M protein family. As to quaternary structure, homomultimer. Interacts with envelope E protein in the budding compartment of the host cell, which is located between endoplasmic reticulum and the Golgi complex. Forms a complex with HE and S proteins. Interacts with nucleocapsid N protein. This interaction probably participates in RNA packaging into the virus.

It localises to the virion membrane. Its subcellular location is the host Golgi apparatus membrane. Component of the viral envelope that plays a central role in virus morphogenesis and assembly via its interactions with other viral proteins. The sequence is that of Membrane protein from Porcine hemagglutinating encephalomyelitis virus (strain 67N) (HEV-67N).